The following is a 306-amino-acid chain: Acetylglutamate kinase (306 aa).

Residues 79–80, arginine 101, and asparagine 203 each bind substrate; that span reads GG.

This sequence belongs to the acetylglutamate kinase family. ArgB subfamily.

It is found in the cytoplasm. It catalyses the reaction N-acetyl-L-glutamate + ATP = N-acetyl-L-glutamyl 5-phosphate + ADP. Its pathway is amino-acid biosynthesis; L-arginine biosynthesis; N(2)-acetyl-L-ornithine from L-glutamate: step 2/4. Its function is as follows. Catalyzes the ATP-dependent phosphorylation of N-acetyl-L-glutamate. The protein is Acetylglutamate kinase of Polaromonas naphthalenivorans (strain CJ2).